Reading from the N-terminus, the 211-residue chain is MAGEIPDLVAEPRAGTGKGAARQARRDGYVPGVVYGGGADPQPIQIKFNELLRRLKAGRFMATLFNLKVEGQEDVRVICRNVQRDVVKDLPTHLDLMRLRRTSKVNLFIPVEFINEGAAPGIKKGGVLTAVRPEVELRVTAGDIPESITVDLTGLDIGDTVTISSVTLPEGATPTIDRDFVIANIQAPSGLRSADNEADEEETEEATAEEV.

Disordered regions lie at residues 1-23 and 191-211; these read MAGE…AARQ and LRSA…AEEV. Positions 196 to 211 are enriched in acidic residues; the sequence is NEADEEETEEATAEEV.

Belongs to the bacterial ribosomal protein bL25 family. CTC subfamily. In terms of assembly, part of the 50S ribosomal subunit; part of the 5S rRNA/L5/L18/L25 subcomplex. Contacts the 5S rRNA. Binds to the 5S rRNA independently of L5 and L18.

In terms of biological role, this is one of the proteins that binds to the 5S RNA in the ribosome where it forms part of the central protuberance. In Dinoroseobacter shibae (strain DSM 16493 / NCIMB 14021 / DFL 12), this protein is Large ribosomal subunit protein bL25.